A 125-amino-acid polypeptide reads, in one-letter code: RxLR effector protein Avh6 (125 aa).

An N-terminal signal peptide occupies residues 1–25; it reads MRLSSTTFVVLAAVLLASGTAVSKA. Residues 48–70 carry the RxLR-dEER motif; that stretch reads RFLRSHHTEDGKAKLSNYDNEER.

Belongs to the RxLR effector family.

Its subcellular location is the secreted. The protein localises to the host cell. Functionally, effector that suppresses plant defense responses during the early stages of pathogen infection. Suppresses cell death induced by effectors and PAMPs in plant hosts. Triggers a hypersensitive response (HR) in the presence of Rps1d. Suppresses BAX-induced cell death and enhanced P.capsici infection in Nicotiana benthamiana. Also suppresses effector-triggered immunity induction by associating with Avr1b and Rps1b, suggesting a role in suppressing plant immunity. This Phytophthora sojae (Soybean stem and root rot agent) protein is RxLR effector protein Avh6.